Here is an 893-residue protein sequence, read N- to C-terminus: Eukaryotic translation initiation factor 3 subunit A (893 aa).

A PCI domain is found at 319-502; that stretch reads LQRMAAHVLL…NSIFFGTDLT (184 aa). 2 coiled-coil regions span residues 576–707 and 784–881; these read QKII…RAKR and EIAL…REVA. Disordered stretches follow at residues 592-634 and 837-893; these read AREL…EIQA and AEAR…RRRQ. Basic and acidic residues predominate over residues 837 to 881; sequence AEARRLEREAEDEKRRQQYEKQRAKEEEAERKIQEDRDRLAREVA.

This sequence belongs to the eIF-3 subunit A family. Component of the eukaryotic translation initiation factor 3 (eIF-3) complex. The eIF-3 complex interacts with pix.

It is found in the cytoplasm. In terms of biological role, RNA-binding component of the eukaryotic translation initiation factor 3 (eIF-3) complex, which is involved in protein synthesis of a specialized repertoire of mRNAs and, together with other initiation factors, stimulates binding of mRNA and methionyl-tRNAi to the 40S ribosome. The eIF-3 complex specifically targets and initiates translation of a subset of mRNAs involved in cell proliferation. This chain is Eukaryotic translation initiation factor 3 subunit A, found in Drosophila grimshawi (Hawaiian fruit fly).